Reading from the N-terminus, the 283-residue chain is Shikimate kinase (283 aa).

86 to 96 (PIKSGLSSSSA) provides a ligand contact to ATP.

This sequence belongs to the GHMP kinase family. Archaeal shikimate kinase subfamily.

It is found in the cytoplasm. The catalysed reaction is shikimate + ATP = 3-phosphoshikimate + ADP + H(+). Its pathway is metabolic intermediate biosynthesis; chorismate biosynthesis; chorismate from D-erythrose 4-phosphate and phosphoenolpyruvate: step 5/7. This chain is Shikimate kinase, found in Methanococcus maripaludis (strain C5 / ATCC BAA-1333).